We begin with the raw amino-acid sequence, 326 residues long: Beta-ketoacyl-[acyl-carrier-protein] synthase III (326 aa).

Residues Cys111 and His253 contribute to the active site. The ACP-binding stretch occupies residues 254 to 258 (QANSR). Asn283 is a catalytic residue.

Belongs to the thiolase-like superfamily. FabH family. As to quaternary structure, homodimer.

Its subcellular location is the cytoplasm. The catalysed reaction is malonyl-[ACP] + acetyl-CoA + H(+) = 3-oxobutanoyl-[ACP] + CO2 + CoA. It functions in the pathway lipid metabolism; fatty acid biosynthesis. In terms of biological role, catalyzes the condensation reaction of fatty acid synthesis by the addition to an acyl acceptor of two carbons from malonyl-ACP. Catalyzes the first condensation reaction which initiates fatty acid synthesis and may therefore play a role in governing the total rate of fatty acid production. Possesses both acetoacetyl-ACP synthase and acetyl transacylase activities. Its substrate specificity determines the biosynthesis of branched-chain and/or straight-chain of fatty acids. This chain is Beta-ketoacyl-[acyl-carrier-protein] synthase III, found in Latilactobacillus sakei subsp. sakei (strain 23K) (Lactobacillus sakei subsp. sakei).